Here is a 420-residue protein sequence, read N- to C-terminus: Reticulon-4 receptor-like 2 (420 aa).

Positions M1–C46 are cleaved as a signal peptide. 2 disulfides stabilise this stretch: C31–C37 and C35–C46. The LRRNT domain occupies Q47 to P60. N-linked (GlcNAc...) asparagine glycosylation occurs at N50. LRR repeat units follow at residues S61–S82, N83–H104, A107–G129, R132–G153, S156–D177, N180–G201, S204–G225, and R228–D249. N93 carries an N-linked (GlcNAc...) asparagine glycan. N-linked (GlcNAc...) asparagine glycosylation occurs at N236. The LRRCT domain maps to N261–P312. 2 disulfide bridges follow: C265-C288 and C267-C310. Residues Q308–P399 form a disordered region. Residues P315–S327 form an important for interaction with MAG region. The span at L351–Q360 shows a compositional bias: basic and acidic residues. C390 is lipidated: GPI-anchor amidated cysteine. A propeptide spans Q391 to L420 (removed in mature form).

This sequence belongs to the Nogo receptor family. As to quaternary structure, interaction with MAG is controversial, and may be indirect. Does not interact with MAG, OMG and RTN4. Interacts with MAG. Post-translationally, undergoes zinc metalloproteinase-mediated ectodomain shedding in neuroblastoma cells; is released both as a full-length ectodomain and an N-terminal fragment containing the leucine-rich repeat (LRR) region of the protein. In terms of processing, N-glycosylated. Highly expressed in brain and liver. Expressed at lower levels in kidney, mammary gland, placenta, skeletal muscle, spleen and thyroid.

The protein localises to the cell membrane. It is found in the membrane raft. It localises to the cell projection. Its subcellular location is the dendrite. The protein resides in the perikaryon. The protein localises to the axon. Functionally, cell surface receptor that plays a functionally redundant role in the inhibition of neurite outgrowth mediated by MAG. Plays a functionally redundant role in postnatal brain development. Contributes to normal axon migration across the brain midline and normal formation of the corpus callosum. Does not seem to play a significant role in regulating axon regeneration in the adult central nervous system. Protects motoneurons against apoptosis; protection against apoptosis is probably mediated by MAG. Like other family members, plays a role in restricting the number dendritic spines and the number of synapses that are formed during brain development. Signaling mediates activation of Rho and downstream reorganization of the actin cytoskeleton. The protein is Reticulon-4 receptor-like 2 of Homo sapiens (Human).